We begin with the raw amino-acid sequence, 363 residues long: Class I histocompatibility antigen, Gogo-B*0201 alpha chain (363 aa).

Residues 1-24 (MQVTAPRTLLLLLSAALALTETWA) form the signal peptide. The tract at residues 25-114 (GSHSMRYFHT…LRGYYNQSED (90 aa)) is alpha-1. Over 25 to 308 (GSHSMRYFHT…EPSSQSTIPI (284 aa)) the chain is Extracellular. An N-linked (GlcNAc...) asparagine glycan is attached at asparagine 110. The tract at residues 115 to 206 (GSHTIQRMYG…ENGKETLQRA (92 aa)) is alpha-2. 2 disulfides stabilise this stretch: cysteine 125–cysteine 188 and cysteine 227–cysteine 283. Positions 207–298 (DPPKTHVTHH…GLPEPLTLRW (92 aa)) are alpha-3. Positions 209–297 (PKTHVTHHPI…EGLPEPLTLR (89 aa)) constitute an Ig-like C1-type domain. The tract at residues 299-308 (EPSSQSTIPI) is connecting peptide. A helical transmembrane segment spans residues 309–333 (VGIVAGLAVLVVTVAVVAVVAAVMC). At 334–363 (RRKSSGGKGGSYSQAASSDSAQGSDVSLTA) the chain is on the cytoplasmic side. The interval 336–363 (KSSGGKGGSYSQAASSDSAQGSDVSLTA) is disordered. Residues 344–363 (SYSQAASSDSAQGSDVSLTA) are compositionally biased toward low complexity.

It belongs to the MHC class I family. As to quaternary structure, heterodimer of an alpha chain and a beta chain (beta-2-microglobulin).

It localises to the membrane. Involved in the presentation of foreign antigens to the immune system. The sequence is that of Class I histocompatibility antigen, Gogo-B*0201 alpha chain from Gorilla gorilla gorilla (Western lowland gorilla).